Consider the following 475-residue polypeptide: Sulfate adenylyltransferase subunit 1 (475 aa).

The 215-residue stretch at 25-239 folds into the tr-type G domain; that stretch reads KSLLRFLTCG…EVLETVEIQR (215 aa). Positions 34–41 are G1; the sequence is GSVDDGKS. Residue 34–41 coordinates GTP; sequence GSVDDGKS. The segment at 92–96 is G2; sequence GITID. A G3 region spans residues 113-116; sequence DTPG. GTP is bound by residues 113-117 and 168-171; these read DTPGH and NKMD. Residues 168–171 are G4; sequence NKMD. Positions 206 to 208 are G5; that stretch reads SAL.

The protein belongs to the TRAFAC class translation factor GTPase superfamily. Classic translation factor GTPase family. CysN/NodQ subfamily. In terms of assembly, heterodimer composed of CysD, the smaller subunit, and CysN.

It catalyses the reaction sulfate + ATP + H(+) = adenosine 5'-phosphosulfate + diphosphate. It participates in sulfur metabolism; hydrogen sulfide biosynthesis; sulfite from sulfate: step 1/3. In terms of biological role, with CysD forms the ATP sulfurylase (ATPS) that catalyzes the adenylation of sulfate producing adenosine 5'-phosphosulfate (APS) and diphosphate, the first enzymatic step in sulfur assimilation pathway. APS synthesis involves the formation of a high-energy phosphoric-sulfuric acid anhydride bond driven by GTP hydrolysis by CysN coupled to ATP hydrolysis by CysD. The chain is Sulfate adenylyltransferase subunit 1 from Shigella sonnei (strain Ss046).